The primary structure comprises 445 residues: Xylose isomerase (445 aa).

Active-site residues include H107 and D110. Residues E238, E274, H277, D302, D313, D315, and D345 each coordinate Mg(2+).

Belongs to the xylose isomerase family. In terms of assembly, homotetramer. Mg(2+) is required as a cofactor.

Its subcellular location is the cytoplasm. The enzyme catalyses alpha-D-xylose = alpha-D-xylulofuranose. The polypeptide is Xylose isomerase (xylA) (Bacillus spizizenii (strain ATCC 23059 / NRRL B-14472 / W23) (Bacillus subtilis subsp. spizizenii)).